A 611-amino-acid polypeptide reads, in one-letter code: Procollagen galactosyltransferase 1-A (611 aa).

The first 24 residues, 1 to 24, serve as a signal peptide directing secretion; it reads MSQAGVDRLLRGLQLLLLVLRLSA. N-linked (GlcNAc...) asparagine glycans are attached at residues asparagine 85, asparagine 173, asparagine 312, asparagine 370, and asparagine 568. Basic and acidic residues predominate over residues 575–591; it reads WDRAKSRKTQQQEKLRS. The segment at 575 to 611 is disordered; the sequence is WDRAKSRKTQQQEKLRSEALNSPSLGSPFDNTARDEL. The Prevents secretion from ER signature appears at 608-611; it reads RDEL.

Belongs to the glycosyltransferase 25 family.

It is found in the endoplasmic reticulum lumen. It carries out the reaction (5R)-5-hydroxy-L-lysyl-[collagen] + UDP-alpha-D-galactose = (5R)-5-O-(beta-D-galactosyl)-5-hydroxy-L-lysyl-[collagen] + UDP + H(+). Its function is as follows. Beta-galactosyltransferase that transfers beta-galactose to hydroxylysine residues of type I collagen. By acting on collagen glycosylation, facilitates the formation of collagen triple helix. This chain is Procollagen galactosyltransferase 1-A (colgalt1-a), found in Xenopus laevis (African clawed frog).